We begin with the raw amino-acid sequence, 627 residues long: Nuclear receptor subfamily 4 group A member 3 (627 aa).

Residues 1 to 112 are activation function (AF)-1 domain; the sequence is MPCVQAQYSP…HHHHHHHHHQ (112 aa). Residues 1–139 form a required for DNA-PK heterotrimer region; it reads MPCVQAQYSP…PSTSMYFKQS (139 aa). Residues 1-292 are interaction with NCOA1, NCOA2, NCOA3 and KAT2B; it reads MPCVQAQYSP…NRSSSSGEGT (292 aa). 2 disordered regions span residues 96-162 and 268-289; these read HGYH…DELP and ASSLLGESPSLPSPPNRSSSSG. Basic residues predominate over residues 97–112; it reads GYHHHHHHHHHHHHHQ. Residues 141-150 are compositionally biased toward pro residues; the sequence is PSTPTTPGFP. Residues 269 to 288 show a composition bias toward low complexity; it reads SSLLGESPSLPSPPNRSSSS. Positions 290 to 365 form a DNA-binding region, nuclear receptor; the sequence is EGTCAVCGDN…VGMVKEVVRT (76 aa). NR C4-type zinc fingers lie at residues 293-313 and 329-353; these read CAVCGDNAACQHYGVRTCEGC and CLANKNCPVDKRRRNRCQYCRFQKC. The segment at 365–395 is disordered; sequence TDSLKGRRGRLPSKPKSPLQQEPSQPSPPSP. Low complexity predominate over residues 378 to 388; sequence KPKSPLQQEPS. An interaction with KAT2B region spans residues 380–627; sequence KSPLQQEPSQ…DKLFLDTLPF (248 aa). The NR LBD domain maps to 395–624; that stretch reads PPICMMNALV…SVIDKLFLDT (230 aa).

This sequence belongs to the nuclear hormone receptor family. NR4 subfamily. Interacts with SIX3 (via homeobox); differentially regulates the transcriptional activities of NR4A3. Interacts with NCOA2; potentiates the activity of the NR4A3. Interacts with NCOA1, NCOA3, MED1 and KAT2B. Interacts with EP300 and NCOA2; mediates the recruitment of MED1 in the coactivator complex. Interacts with the constituents of DNA-PK heterotrimer PRKDC, XRCC6 and XRCC5; phosphorylates and prevents NR4A3 ubiquitinylation and degradation. Interacts with NR3C1 (via nuclear receptor DNA-binding domain); the interactions represses transcription activity of NR4A3 on the POMC promoter Nur response element (NurRE). Interacts with TRIM28; the interactions potentiates NR4A3 activity on NurRE promoter. Binds DNA as a monomer and homodimer. Interacts with PARP1; activates PARP1 by improving acetylation of PARP1 and suppressing the interaction between PARP1 and SIRT1. Phosphorylated by PRKDC. In terms of tissue distribution, ubiquitous. Highest levels of expression in brain. Widely expressed throughout the arcuate nucleus region of the hypothalamus, namely in AgRP neurons.

It is found in the nucleus. Functionally, transcriptional activator that binds to regulatory elements in promoter regions in a cell- and response element (target)-specific manner. Induces gene expression by binding as monomers to the NR4A1 response element (NBRE) 5'-AAAAGGTCA-3' site and as homodimers to the Nur response element (NurRE) site in the promoter of their regulated target genes. Plays a role in the regulation of proliferation, survival and differentiation of many different cell types and also in metabolism and inflammation. Mediates proliferation of vascular smooth muscle, myeloid progenitor cell and type B pancreatic cells; promotes mitogen-induced vascular smooth muscle cell proliferation through transactivation of SKP2 promoter by binding a NBRE site. Upon PDGF stimulation, stimulates vascular smooth muscle cell proliferation by regulating CCND1 and CCND2 expression. In islets, induces type B pancreatic cell proliferation through up-regulation of genes that activate cell cycle, as well as genes that cause degradation of the CDKN1A. Negatively regulates myeloid progenitor cell proliferation by repressing RUNX1 in a NBRE site-independent manner. During inner ear, plays a role as a key mediator of the proliferative growth phase of semicircular canal development. Also mediates survival of neuron and smooth muscle cells; mediates CREB-induced neuronal survival, and during hippocampus development, plays a critical role in pyramidal cell survival and axonal guidance. Is required for S phase entry of the cell cycle and survival of smooth muscle cells by inducing CCND1, resulting in RB1 phosphorylation. Binds to NBRE motif in CCND1 promoter, resulting in the activation of the promoter and CCND1 transcription. Also plays a role in inflammation; upon TNF stimulation, mediates monocyte adhesion by inducing the expression of VCAM1 and ICAM1 by binding to the NBRE consensus site. In mast cells activated by Fc-epsilon receptor cross-linking, promotes the synthesis and release of cytokines but impairs events leading to degranulation. Also plays a role in metabolism; by modulating feeding behavior; and by playing a role in energy balance by inhibiting the glucocorticoid-induced orexigenic neuropeptides AGRP expression, at least in part by forming a complex with activated NR3C1 on the AGRP- glucocorticoid response element (GRE), and thus weakening the DNA binding activity of NR3C1. Upon catecholamines stimulation, regulates gene expression that controls oxidative metabolism in skeletal muscle. Plays a role in glucose transport by regulating translocation of the SLC2A4 glucose transporter to the cell surface. Finally, during gastrulation plays a crucial role in the formation of anterior mesoderm by controlling cell migration. Inhibits adipogenesis. Also participates in cardiac hypertrophy by activating PARP1. This is Nuclear receptor subfamily 4 group A member 3 (Nr4a3) from Mus musculus (Mouse).